We begin with the raw amino-acid sequence, 73 residues long: Kappa-scoloptoxin(03)-Ssm1b (73 aa).

An N-terminal signal peptide occupies residues 1-23 (MKPSMAILLVIALIIFSLDKSYS). 3 disulfide bridges follow: C32/C58, C41/C57, and C44/C67.

Post-translationally, contains 3 disulfide bonds. In terms of tissue distribution, expressed by the venom gland.

Its subcellular location is the secreted. Inhibits voltage-gated potassium channels. This chain is Kappa-scoloptoxin(03)-Ssm1b, found in Scolopendra mutilans (Chinese red-headed centipede).